Consider the following 541-residue polypeptide: Chaperonin GroEL (541 aa).

Residues T29 to P32, D86 to T90, G413, D477 to L479, and D493 contribute to the ATP site.

It belongs to the chaperonin (HSP60) family. Forms a cylinder of 14 subunits composed of two heptameric rings stacked back-to-back. Interacts with the co-chaperonin GroES.

It is found in the cytoplasm. The enzyme catalyses ATP + H2O + a folded polypeptide = ADP + phosphate + an unfolded polypeptide.. Its function is as follows. Together with its co-chaperonin GroES, plays an essential role in assisting protein folding. The GroEL-GroES system forms a nano-cage that allows encapsulation of the non-native substrate proteins and provides a physical environment optimized to promote and accelerate protein folding. This Clostridium botulinum (strain Loch Maree / Type A3) protein is Chaperonin GroEL.